Here is a 1028-residue protein sequence, read N- to C-terminus: Multidrug resistance protein MdtC (1028 aa).

12 helical membrane passes run 3-23 (FFALFIYRPVATILISIAITL), 333-353 (EVEQTLVISVALVILVVFLFL), 360-380 (LIPAVAVPVSLIGTFAAMYLC), 387-407 (LSLMALTIATGFVVDDAIVVL), 431-451 (VGFTVLSMSLSLVAVFLPLLL), 463-483 (FAVTLSVAIGISLLVSLTLTP), 528-548 (LVGVVLLGTIALNIWLYISIP), 853-873 (VILILAAIATVYIVLGILYES), 875-895 (VHPLTILSTLPSAGVGALLAL), 897-917 (LFNAPFSLIALIGIMLLIGIV), 953-973 (PIMMTTLAALFGALPLVISGG), and 984-1004 (ITIVGGLVMSQLLTLYTTPVV).

It belongs to the resistance-nodulation-cell division (RND) (TC 2.A.6) family. MdtC subfamily. As to quaternary structure, part of a tripartite efflux system composed of MdtA, MdtB and MdtC. MdtC forms a heteromultimer with MdtB.

The protein localises to the cell inner membrane. The polypeptide is Multidrug resistance protein MdtC (Citrobacter koseri (strain ATCC BAA-895 / CDC 4225-83 / SGSC4696)).